Consider the following 87-residue polypeptide: Stannin (87 aa).

Residues 1-10 (MSIMDHSPTT) lie on the Mitochondrial intermembrane side of the membrane. Residues 11-31 (GVVTVIVILIAIAALGALILG) form a helical membrane-spanning segment. Topologically, residues 32-87 (CWCYLRLQRISQSEDEESIVGDGETKEPFLLVQYSAKGPCVERKAKLTPNGPEVHS) are cytoplasmic. Ser-49 bears the Phosphoserine mark.

Belongs to the stannin family. In terms of assembly, monomer.

The protein localises to the mitochondrion outer membrane. Its function is as follows. Plays a role in the toxic effects of organotins. Plays a role in endosomal maturation. In Bos taurus (Bovine), this protein is Stannin (SNN).